The sequence spans 280 residues: Pupal cuticle protein 36a (280 aa).

The first 15 residues, 1–15 (MKLFVLAAVLGVCLA), serve as a signal peptide directing secretion. The 64-residue stretch at 135–198 (AEGFAYDFET…SQGAHLPTPP (64 aa)) folds into the Chitin-binding type R&amp;R domain. The interval 258–280 (GAGRAGGTATSASEAPTTTIRLM) is disordered.

In Manduca sexta (Tobacco hawkmoth), this protein is Pupal cuticle protein 36a (PCP36a).